Here is a 364-residue protein sequence, read N- to C-terminus: Alanine racemase (364 aa).

K35 acts as the Proton acceptor; specific for D-alanine in catalysis. K35 bears the N6-(pyridoxal phosphate)lysine mark. Residue R131 coordinates substrate. Catalysis depends on Y256, which acts as the Proton acceptor; specific for L-alanine. M304 serves as a coordination point for substrate.

This sequence belongs to the alanine racemase family. Requires pyridoxal 5'-phosphate as cofactor.

The catalysed reaction is L-alanine = D-alanine. Its pathway is amino-acid biosynthesis; D-alanine biosynthesis; D-alanine from L-alanine: step 1/1. Its function is as follows. Catalyzes the interconversion of L-alanine and D-alanine. May also act on other amino acids. In Halorhodospira halophila (strain DSM 244 / SL1) (Ectothiorhodospira halophila (strain DSM 244 / SL1)), this protein is Alanine racemase (alr).